The primary structure comprises 432 residues: Peptidase B (432 aa).

2 residues coordinate Mn(2+): Lys-196 and Asp-201. Lys-208 is a catalytic residue. 3 residues coordinate Mn(2+): Asp-219, Asp-278, and Glu-280. The active site involves Arg-282.

The protein belongs to the peptidase M17 family. In terms of assembly, homohexamer. Mn(2+) is required as a cofactor.

It localises to the cytoplasm. The catalysed reaction is Release of an N-terminal amino acid, Xaa, from a peptide or arylamide. Xaa is preferably Glu or Asp but may be other amino acids, including Leu, Met, His, Cys and Gln.. Its function is as follows. Probably plays an important role in intracellular peptide degradation. This Yersinia pseudotuberculosis serotype IB (strain PB1/+) protein is Peptidase B.